The sequence spans 281 residues: MIETLLPASALAFPNIDPVIFRVGPLAVHWYGLGYVVGIMFAWWYGKKLLRSHRLWANNQPPMAPEALDDFVIWAALGVVLGGRIGYVLFYNFSYYISNPLAIPAVWDGGMSFHGGILGTTLAMILFARSRGIKVWSMFDTIAAGVPVGLGVVRVANFINSELWGRVSDVPWAVYFPNGGPLPRHPSQLYEAFLEGVVLFFVLFLLVWVGRKLKKPGFIAGAFVTGYGLSRIVVEFFREPDAQLGYLFGGWLTMGMVLSVPMVLIGLWAMWRANRTAAKDA.

The next 4 helical transmembrane spans lie at valine 23–tryptophan 43, phenylalanine 71–tyrosine 91, tryptophan 107–phenylalanine 127, and isoleucine 133–valine 153. Residue arginine 154 participates in a 1,2-diacyl-sn-glycero-3-phospho-(1'-sn-glycerol) binding. 3 helical membrane passes run leucine 189 to valine 209, glycine 217 to phenylalanine 237, and leucine 247 to leucine 267.

It belongs to the Lgt family.

The protein resides in the cell inner membrane. It carries out the reaction L-cysteinyl-[prolipoprotein] + a 1,2-diacyl-sn-glycero-3-phospho-(1'-sn-glycerol) = an S-1,2-diacyl-sn-glyceryl-L-cysteinyl-[prolipoprotein] + sn-glycerol 1-phosphate + H(+). The protein operates within protein modification; lipoprotein biosynthesis (diacylglyceryl transfer). Catalyzes the transfer of the diacylglyceryl group from phosphatidylglycerol to the sulfhydryl group of the N-terminal cysteine of a prolipoprotein, the first step in the formation of mature lipoproteins. This is Phosphatidylglycerol--prolipoprotein diacylglyceryl transferase from Brucella anthropi (strain ATCC 49188 / DSM 6882 / CCUG 24695 / JCM 21032 / LMG 3331 / NBRC 15819 / NCTC 12168 / Alc 37) (Ochrobactrum anthropi).